Here is a 67-residue protein sequence, read N- to C-terminus: Large ribosomal subunit protein uL29 (67 aa).

The protein belongs to the universal ribosomal protein uL29 family.

In Alkaliphilus oremlandii (strain OhILAs) (Clostridium oremlandii (strain OhILAs)), this protein is Large ribosomal subunit protein uL29.